The following is a 238-amino-acid chain: DNA repair protein RecO (238 aa).

It belongs to the RecO family.

In terms of biological role, involved in DNA repair and RecF pathway recombination. The chain is DNA repair protein RecO from Flavobacterium psychrophilum (strain ATCC 49511 / DSM 21280 / CIP 103535 / JIP02/86).